The chain runs to 160 residues: Sulfur-rich protein (160 aa).

2 helical membrane-spanning segments follow: residues 62-82 (ITMV…TFVL) and 91-111 (FLFL…SVFM).

The protein resides in the membrane. The sequence is that of Sulfur-rich protein (srp) from Chlamydia caviae (strain ATCC VR-813 / DSM 19441 / 03DC25 / GPIC) (Chlamydophila caviae).